The sequence spans 309 residues: Methionyl-tRNA formyltransferase (309 aa).

Residue 107 to 110 (SLLP) coordinates (6S)-5,6,7,8-tetrahydrofolate.

The protein belongs to the Fmt family.

The catalysed reaction is L-methionyl-tRNA(fMet) + (6R)-10-formyltetrahydrofolate = N-formyl-L-methionyl-tRNA(fMet) + (6S)-5,6,7,8-tetrahydrofolate + H(+). In terms of biological role, attaches a formyl group to the free amino group of methionyl-tRNA(fMet). The formyl group appears to play a dual role in the initiator identity of N-formylmethionyl-tRNA by promoting its recognition by IF2 and preventing the misappropriation of this tRNA by the elongation apparatus. The protein is Methionyl-tRNA formyltransferase of Borrelia turicatae (strain 91E135).